Here is a 105-residue protein sequence, read N- to C-terminus: MDGMIAMLPAPLQKLSSHIDFQGQKVAERTYQVILTIAGIIGFLVGFWTQQLSYAMFTVLGASAFTALIILPPWPFLFRKNPIVWHTPAEPQESGDKKKETKKTK.

The Cytoplasmic portion of the chain corresponds to 1 to 32 (MDGMIAMLPAPLQKLSSHIDFQGQKVAERTYQ). The chain crosses the membrane as a helical span at residues 33–53 (VILTIAGIIGFLVGFWTQQLS). Residues 54–56 (YAM) lie on the Lumenal side of the membrane. A helical membrane pass occupies residues 57 to 77 (FTVLGASAFTALIILPPWPFL). Over 78–105 (FRKNPIVWHTPAEPQESGDKKKETKKTK) the chain is Cytoplasmic.

It belongs to the SPCS1 family. Component of the signal peptidase complex (SPC) composed of a catalytic subunit sec-11 and three accessory subunits spcs-1, spcs-2 and spcs-3. The complex induces a local thinning of the ER membrane which is used to measure the length of the signal peptide (SP) h-region of protein substrates. This ensures the selectivity of the complex towards h-regions shorter than 18-20 amino acids.

It is found in the endoplasmic reticulum membrane. Functionally, component of the signal peptidase complex (SPC) which catalyzes the cleavage of N-terminal signal sequences from nascent proteins as they are translocated into the lumen of the endoplasmic reticulum. Dispensable for SPC enzymatic activity. This chain is Signal peptidase complex subunit 1, found in Caenorhabditis elegans.